We begin with the raw amino-acid sequence, 425 residues long: Protein CLP1 homolog (425 aa).

Residues E18, K59, and 121 to 126 contribute to the ATP site; that span reads DVGKST.

Belongs to the Clp1 family. Clp1 subfamily.

It is found in the nucleus. Its function is as follows. Required for endonucleolytic cleavage during polyadenylation-dependent pre-mRNA 3'-end formation. The chain is Protein CLP1 homolog (cbc) from Drosophila mojavensis (Fruit fly).